Reading from the N-terminus, the 281-residue chain is Probable endonuclease 4 (281 aa).

Zn(2+) is bound by residues His-69, His-109, Glu-145, Asp-179, His-182, His-216, Asp-229, His-231, and Glu-261.

Belongs to the AP endonuclease 2 family. It depends on Zn(2+) as a cofactor.

It catalyses the reaction Endonucleolytic cleavage to 5'-phosphooligonucleotide end-products.. In terms of biological role, endonuclease IV plays a role in DNA repair. It cleaves phosphodiester bonds at apurinic or apyrimidinic (AP) sites, generating a 3'-hydroxyl group and a 5'-terminal sugar phosphate. The chain is Probable endonuclease 4 from Chlorobaculum tepidum (strain ATCC 49652 / DSM 12025 / NBRC 103806 / TLS) (Chlorobium tepidum).